The sequence spans 470 residues: Negative regulator of sexual conjugation and meiosis (470 aa).

Positions 18 to 295 constitute a Protein kinase domain; it reads LRFVSIIGAG…ITLPELSTLV (278 aa). Residues 24–32 and Lys-47 contribute to the ATP site; that span reads IGAGAYGVV. Asp-143 serves as the catalytic Proton acceptor. At Ser-469 the chain carries Phosphoserine.

Belongs to the protein kinase superfamily. Ser/Thr protein kinase family.

It catalyses the reaction L-seryl-[protein] + ATP = O-phospho-L-seryl-[protein] + ADP + H(+). The enzyme catalyses L-threonyl-[protein] + ATP = O-phospho-L-threonyl-[protein] + ADP + H(+). This protein is a negative regulator of both sexual conjugation and meiosis. It phosphorylates mei2. It blocks the onset of meiosis until conjugation takes place. The sequence is that of Negative regulator of sexual conjugation and meiosis (ran1) from Schizosaccharomyces pombe (strain 972 / ATCC 24843) (Fission yeast).